We begin with the raw amino-acid sequence, 176 residues long: Ribosome maturation factor RimM (176 aa).

One can recognise a PRC barrel domain in the interval 100–173 (EGEFHLLDLV…WLRLTPPPGL (74 aa)).

The protein belongs to the RimM family. Binds ribosomal protein uS19.

It localises to the cytoplasm. An accessory protein needed during the final step in the assembly of 30S ribosomal subunit, possibly for assembly of the head region. Essential for efficient processing of 16S rRNA. May be needed both before and after RbfA during the maturation of 16S rRNA. It has affinity for free ribosomal 30S subunits but not for 70S ribosomes. This is Ribosome maturation factor RimM from Prochlorococcus marinus (strain MIT 9303).